A 438-amino-acid polypeptide reads, in one-letter code: UDP-N-acetylmuramoylalanine--D-glutamate ligase (438 aa).

112-118 (GSNGKST) lines the ATP pocket.

Belongs to the MurCDEF family.

It localises to the cytoplasm. The catalysed reaction is UDP-N-acetyl-alpha-D-muramoyl-L-alanine + D-glutamate + ATP = UDP-N-acetyl-alpha-D-muramoyl-L-alanyl-D-glutamate + ADP + phosphate + H(+). It participates in cell wall biogenesis; peptidoglycan biosynthesis. Functionally, cell wall formation. Catalyzes the addition of glutamate to the nucleotide precursor UDP-N-acetylmuramoyl-L-alanine (UMA). The sequence is that of UDP-N-acetylmuramoylalanine--D-glutamate ligase from Salmonella typhi.